The following is a 547-amino-acid chain: ATP synthase subunit alpha (547 aa).

ATP is bound at residue 173–180 (GDRQTGKT).

Belongs to the ATPase alpha/beta chains family. F-type ATPases have 2 components, CF(1) - the catalytic core - and CF(0) - the membrane proton channel. CF(1) has five subunits: alpha(3), beta(3), gamma(1), delta(1), epsilon(1). CF(0) has three main subunits: a(1), b(2) and c(9-12). The alpha and beta chains form an alternating ring which encloses part of the gamma chain. CF(1) is attached to CF(0) by a central stalk formed by the gamma and epsilon chains, while a peripheral stalk is formed by the delta and b chains.

Its subcellular location is the cell membrane. It catalyses the reaction ATP + H2O + 4 H(+)(in) = ADP + phosphate + 5 H(+)(out). In terms of biological role, produces ATP from ADP in the presence of a proton gradient across the membrane. The alpha chain is a regulatory subunit. The chain is ATP synthase subunit alpha from Thermobifida fusca (strain YX).